Reading from the N-terminus, the 198-residue chain is Probable GTP-binding protein EngB (198 aa).

The 174-residue stretch at 22–195 (DLPEIALAGR…WKAIHKMTKT (174 aa)) folds into the EngB-type G domain. GTP is bound by residues 30-37 (GRSNVGKS), 57-61 (GKTQT), 75-78 (DVPG), 142-145 (TKAD), and 174-176 (FSS). Mg(2+)-binding residues include Ser-37 and Thr-59.

It belongs to the TRAFAC class TrmE-Era-EngA-EngB-Septin-like GTPase superfamily. EngB GTPase family. Mg(2+) is required as a cofactor.

Functionally, necessary for normal cell division and for the maintenance of normal septation. The protein is Probable GTP-binding protein EngB of Bacillus mycoides (strain KBAB4) (Bacillus weihenstephanensis).